Reading from the N-terminus, the 229-residue chain is uncharacterized protein (229 aa).

An N-terminal signal peptide occupies residues 1–26 (MSRNDARYLRCTAALGAAFFACGAAA).

Belongs to the OmpW/AlkL family.

It is found in the cell outer membrane. This is an uncharacterized protein from Sinorhizobium fredii (strain NBRC 101917 / NGR234).